The primary structure comprises 264 residues: tRNA pseudouridine synthase A (264 aa).

Asp-51 serves as the catalytic Nucleophile. Substrate is bound at residue Tyr-109.

It belongs to the tRNA pseudouridine synthase TruA family. As to quaternary structure, homodimer.

It catalyses the reaction uridine(38/39/40) in tRNA = pseudouridine(38/39/40) in tRNA. Formation of pseudouridine at positions 38, 39 and 40 in the anticodon stem and loop of transfer RNAs. The protein is tRNA pseudouridine synthase A of Vibrio vulnificus (strain CMCP6).